The chain runs to 303 residues: Major fimbrium anchoring subunit FimB (303 aa).

An N-terminal signal peptide occupies residues 1–22 (MNDAKKYIVSVLILLVAGMFGG). The N-palmitoyl cysteine moiety is linked to residue Cys23. The S-diacylglycerol cysteine moiety is linked to residue Cys23.

It belongs to the bacteroidetes fimbrillin superfamily. FimB/Mfa2 family. As to quaternary structure, fimB is not part of the fimbrium itself, but anchors the fimbrium in the outer membrane. Linear, head-to-tail oligomerization of fimbrial subunits mediates assembly of the fimbrium stalk, while the minor components FimC, FimD and FimE probably form the fimbrium tip. The anchoring subunit FimB limits fimbrium length and is important for solid fimbrium attachment to the outer membrane. In its absence, the major fimbriae become very long and are easily detached from the membrane.

It is found in the cell outer membrane. In terms of biological role, anchoring subunit of the major fimbriae. Regulates fimbrial length. These filamentous pili are attached to the cell surface; they mediate biofilm formation, adhesion onto host cells and onto other bacteria that are part of the oral microbiome. Fimbriae of P.gingivalis are major virulence factors. This Porphyromonas gingivalis (strain ATCC 33277 / DSM 20709 / CIP 103683 / JCM 12257 / NCTC 11834 / 2561) protein is Major fimbrium anchoring subunit FimB.